A 341-amino-acid chain; its full sequence is S-adenosylmethionine:tRNA ribosyltransferase-isomerase (341 aa).

This sequence belongs to the QueA family. In terms of assembly, monomer.

It is found in the cytoplasm. The enzyme catalyses 7-aminomethyl-7-carbaguanosine(34) in tRNA + S-adenosyl-L-methionine = epoxyqueuosine(34) in tRNA + adenine + L-methionine + 2 H(+). The protein operates within tRNA modification; tRNA-queuosine biosynthesis. Functionally, transfers and isomerizes the ribose moiety from AdoMet to the 7-aminomethyl group of 7-deazaguanine (preQ1-tRNA) to give epoxyqueuosine (oQ-tRNA). This is S-adenosylmethionine:tRNA ribosyltransferase-isomerase from Staphylococcus aureus (strain USA300).